The following is a 341-amino-acid chain: uncharacterized protein (341 aa).

Transmembrane regions (helical) follow at residues 6 to 26 (IIAG…TTLW), 63 to 83 (LLLC…WVLI), and 137 to 157 (AQGL…LSAV).

It is found in the cell membrane. This is an uncharacterized protein from Bacillus subtilis (strain 168).